The following is a 208-amino-acid chain: Translation initiation factor 2 subunit beta (208 aa).

One can recognise a TRAM domain in the interval Val-145–Glu-203.

This sequence belongs to the eIF-2-beta/eIF-5 family. As to quaternary structure, heterotrimer composed of an alpha, a beta and a gamma chain.

EIF-2 functions in the early steps of protein synthesis by forming a ternary complex with GTP and initiator tRNA. This is Translation initiation factor 2 subunit beta from Methanothrix thermoacetophila (strain DSM 6194 / JCM 14653 / NBRC 101360 / PT) (Methanosaeta thermophila).